The sequence spans 567 residues: D-lactate dehydrogenase [cytochrome], mitochondrial (567 aa).

The N-terminal 56 residues, Met-1–Leu-56, are a transit peptide targeting the mitochondrion. The FAD-binding PCMH-type domain maps to Ala-142–Ile-319.

The protein belongs to the FAD-binding oxidoreductase/transferase type 4 family. Homodimer. The cofactor is FAD. As to expression, expressed in leaves, stems, flowers and roots.

The protein localises to the mitochondrion. It carries out the reaction (R)-lactate + 2 Fe(III)-[cytochrome c] = 2 Fe(II)-[cytochrome c] + pyruvate + 2 H(+). Its activity is regulated as follows. Inhibited by cyanide ions. Catalyzes the stereospecific oxidation of D-lactate to pyruvate. Involved in the detoxification of methylglyoxal and D-lactate, but probably not involved in the metabolization of glycolate. In Arabidopsis thaliana (Mouse-ear cress), this protein is D-lactate dehydrogenase [cytochrome], mitochondrial.